Here is a 343-residue protein sequence, read N- to C-terminus: 7-epi-alpha-eudesmol synthase ((2E,6E)-farnesyl diphosphate cyclizing) (343 aa).

Mg(2+) contacts are provided by aspartate 80 and aspartate 84. Residues 80 to 84 (DDQFD) carry the DDXXD motif motif. Arginine 177 is a binding site for substrate. Positions 223 and 227 each coordinate Mg(2+). Arginine 230 is a substrate binding site. Residue glutamate 231 coordinates Mg(2+). Residue 317-318 (RY) participates in substrate binding.

This sequence belongs to the terpene synthase family. The cofactor is Mg(2+).

The enzyme catalyses (2E,6E)-farnesyl diphosphate + H2O = 7-epi-alpha-eudesmol + diphosphate. It functions in the pathway secondary metabolite biosynthesis; terpenoid biosynthesis. Functionally, catalyzes the conversion of (2E,6E)-farnesyl diphosphate (FPP) to yield the bicyclic sesquiterpenol 7-epi-alpha-eudesmol via a 1,10-cyclization, which requires the abstraction of the pyrophosphate from FPP to yield the (E,E)-germacradienyl cation. The only accepted substrate is (2E,6E)-farnesyl diphosphate (FPP). The protein is 7-epi-alpha-eudesmol synthase ((2E,6E)-farnesyl diphosphate cyclizing) of Streptomyces viridochromogenes (strain DSM 40736 / JCM 4977 / BCRC 1201 / Tue 494).